We begin with the raw amino-acid sequence, 98 residues long: Small ribosomal subunit protein uS19 (98 aa).

The protein belongs to the universal ribosomal protein uS19 family.

Its function is as follows. Protein S19 forms a complex with S13 that binds strongly to the 16S ribosomal RNA. This chain is Small ribosomal subunit protein uS19, found in Chlorobaculum parvum (strain DSM 263 / NCIMB 8327) (Chlorobium vibrioforme subsp. thiosulfatophilum).